The following is a 297-amino-acid chain: MDSAAPREPGATEPPARARPRLVFRTQLAHGSPTGRIEGFTNVRELYAKIAEAFGIAPTEILFCTLNSHKVDMQKLLGGQIGLEDFIFAHVRGETKEVEVTKTEDALGLTITDNGAGYAFIKRIKEGSIINRIEAVCVGDSIEAINDHSIVGCRHYEVAKMLRELPKSQPFTLRLVQPRRAFDMIGQRSRSSKCPVEAKVSSGRETLRLRSGGAATVEEAPSDVEAAAARRVDDLLESYMGIRDPELAAAVVETARSSAGAQAFARGLDAVLGEFAFPDEFVVEVWAAIGEAHDACG.

A PDZ domain is found at 97–177 (EVEVTKTEDA…SQPFTLRLVQ (81 aa)).

The protein belongs to the GIPC family. As to expression, expressed in adult lung, brain and testis. In the inner ear, it is expressed in the inner and outer hair cells of the organ of Corti. Also expressed in cochlear spiral ganglion neurons.

In terms of biological role, required for postnatal maturation of the hair bundle and long-term survival of hair cells and spiral ganglion. The chain is PDZ domain-containing protein GIPC3 (Gipc3) from Mus musculus (Mouse).